Consider the following 53-residue polypeptide: Antitoxin RelB3 (53 aa).

In terms of assembly, forms heterodimers with RelE and possibly a heterotetramer RelE3-RelB3(2)-RelE3 from 2 heterodimers. The heterotetramer is probably not very stable in solution.

Functionally, antitoxin component of a type II toxin-antitoxin (TA) system. Probably neutralizes the toxic activity of cognate toxin RelE. This chain is Antitoxin RelB3 (relB3), found in Methanocaldococcus jannaschii (strain ATCC 43067 / DSM 2661 / JAL-1 / JCM 10045 / NBRC 100440) (Methanococcus jannaschii).